The chain runs to 605 residues: Adaptin medium chain homolog APM2 (605 aa).

The segment at 150-196 (EEWSPGEESSSSSGSDSDSEYSNTNKRKDKKKKRKKKKGTKGKSVGK) is disordered. Low complexity predominate over residues 155–171 (GEESSSSSGSDSDSEYS). Residues 174 to 196 (NKRKDKKKKRKKKKGTKGKSVGK) show a composition bias toward basic residues. Positions 269-604 (KNEFFLDVIE…TVSDEEYAYI (336 aa)) constitute an MHD domain.

This sequence belongs to the adaptor complexes medium subunit family. Component of the AP-1R complex composed of at least APM2, APL4 and APS1. Interacts with MIL1. Interacts with APL2.

The protein localises to the golgi apparatus membrane. The protein resides in the early endosome membrane. It localises to the cytoplasmic vesicle. It is found in the clathrin-coated vesicle membrane. Its function is as follows. Component of the AP-1-related (AP-1R) complex, an adapter protein complex that mediates of cargo protein sorting in clathrin-coated vesicles. AP-1R has a specific role in SNARE SNC1 sorting. In contrast to the APM1-containing AP-1 complex, AP-1R is incapable of sorting CHS3. This chain is Adaptin medium chain homolog APM2 (APM2), found in Saccharomyces cerevisiae (strain ATCC 204508 / S288c) (Baker's yeast).